The primary structure comprises 289 residues: Splicing factor C9orf78 homolog (289 aa).

Disordered stretches follow at residues 1 to 30 (MRIT…VRLK) and 85 to 111 (RGKD…RRDE). Residues 5 to 58 (GKTFRRRRADSESEEDEQESEEVRLKLEETREVQNLRKRPNGVSAAALLVGEKV) are interaction with SNRNP200. Residues Ser15 and Ser17 each carry the phosphoserine modification. At Tyr147 the chain carries Phosphotyrosine. A compositionally biased stretch (basic and acidic residues) spans 232–283 (LNAPIRRNKEEPKARPLRVGDTEKPEPERSPPNRKRPANEKATDDYHYEKFK). The disordered stretch occupies residues 232 to 289 (LNAPIRRNKEEPKARPLRVGDTEKPEPERSPPNRKRPANEKATDDYHYEKFKKMNRRY). The residue at position 253 (Thr253) is a Phosphothreonine. Ser261 bears the Phosphoserine mark.

It belongs to the TLS1 family. As to quaternary structure, component of the spliceosome. Interacts with SNRNP200; the interaction is direct. Interacts with PRPF8.

The protein resides in the nucleus. It is found in the chromosome. Its subcellular location is the centromere. Functionally, plays a role in pre-mRNA splicing by promoting usage of the upstream 3'-splice site at alternative NAGNAG splice sites; these are sites featuring alternative acceptor motifs separated by only a few nucleotides. May also modulate exon inclusion events. PPlays a role in spliceosomal remodeling by displacing WBP4 from SNRNP200 and may act to inhibit SNRNP200 helicase activity. Binds U5 snRNA. Required for proper chromosome segregation. Not required for splicing of shelterin components. This chain is Splicing factor C9orf78 homolog, found in Mus musculus (Mouse).